A 194-amino-acid polypeptide reads, in one-letter code: Histone H1.0 (194 aa).

N-acetylmethionine is present on M1. The span at 1–11 (MTENSTSAPAA) shows a compositional bias: low complexity. The segment at 1–28 (MTENSTSAPAAKPKRAKASKKSTDHPKY) is disordered. Residue T2 is modified to N-acetylthreonine; in Histone H1.0, N-terminally processed. Positions 24-97 (DHPKYSDMIV…GASGSFRLAK (74 aa)) constitute an H15 domain. R42 is modified (citrulline). Positions 86–194 (GVGASGSFRL…SSAKRASKKK (109 aa)) are disordered. S104 carries the ADP-ribosylserine modification. A compositionally biased stretch (basic residues) spans 105-194 (VAFKKTKKEV…SSAKRASKKK (90 aa)).

This sequence belongs to the histone H1/H5 family. In terms of processing, ADP-ribosylated on Ser-104 in response to DNA damage.

Its subcellular location is the nucleus. It is found in the chromosome. Histones H1 are necessary for the condensation of nucleosome chains into higher-order structures. The histones H1.0 are found in cells that are in terminal stages of differentiation or that have low rates of cell division. The chain is Histone H1.0 (H1-0) from Mus musculus (Mouse).